A 236-amino-acid polypeptide reads, in one-letter code: Large ribosomal subunit protein uL1 (236 aa).

This sequence belongs to the universal ribosomal protein uL1 family. As to quaternary structure, part of the 50S ribosomal subunit.

Binds directly to 23S rRNA. The L1 stalk is quite mobile in the ribosome, and is involved in E site tRNA release. In terms of biological role, protein L1 is also a translational repressor protein, it controls the translation of the L11 operon by binding to its mRNA. This chain is Large ribosomal subunit protein uL1, found in Sorangium cellulosum (strain So ce56) (Polyangium cellulosum (strain So ce56)).